We begin with the raw amino-acid sequence, 1159 residues long: Phosphatidylinositol 3-kinase age-1 (1159 aa).

A compositionally biased stretch (polar residues) spans 1–25 (MSMGRSSSTTFRNRTASHGSRSLGS). The interval 1–28 (MSMGRSSSTTFRNRTASHGSRSLGSAET) is disordered. The PI3K-ABD domain occupies 79–179 (SEGVADMIVL…FPMLFLFEPD (101 aa)). A PI3K-RBD domain is found at 272-363 (RKSEANEVWE…YRCPGFVVRR (92 aa)). Residues 430–588 (LDSNLMIRPV…VKMPNEAQYK (159 aa)) form the C2 PI3K-type domain. The PIK helical domain maps to 607–793 (DYEACIGDPG…SLLMEAYLRG (187 aa)). A PI3K/PI4K catalytic domain is found at 858-1159 (VIEKAIVLGS…NWLFHAMKHY (302 aa)). Residues 864–870 (VLGSAKQ) are G-loop. The interval 1028–1036 (GIKDRHSDN) is catalytic loop. The segment at 1047–1073 (HIDFGHILGHGKTKLGIQRDRQPFILT) is activation loop.

Belongs to the PI3/PI4-kinase family.

It catalyses the reaction a 1,2-diacyl-sn-glycero-3-phospho-(1D-myo-inositol) + ATP = a 1,2-diacyl-sn-glycero-3-phospho-(1D-myo-inositol-3-phosphate) + ADP + H(+). Phosphatidylinositol 3-kinase homolog that regulates longevity and diapause. Promotes cell survival during embryonic development by recruiting akt-1/2 to the plasma membrane through the production of PtdIns(3,4,5)P3. Could function in the development or neuroendocrine signaling of the dauer pathway. Mediates susceptibility to enteropathogenic E.coli infection. May negatively regulate AYI interneuron neurite outgrowth. Plays a role in aversive olfactory learning when an odor is associated with food deprivation. Regulates this process by promoting the nuclear relocalization of egl-4 in AWC olfactory neurons after odor conditioning. This Caenorhabditis briggsae protein is Phosphatidylinositol 3-kinase age-1 (age-1).